We begin with the raw amino-acid sequence, 345 residues long: Low-density lipoprotein receptor class A domain-containing protein 3 (345 aa).

The first 17 residues, 1–17 (MWLLGPLCLLLSSAAES), serve as a signal peptide directing secretion. At 18 to 173 (QLLPGNNFTN…NQLVYYPSIT (156 aa)) the chain is on the extracellular side. N-linked (GlcNAc...) asparagine glycosylation occurs at Asn-24. LDL-receptor class A domains follow at residues 28-65 (ECNI…KECP), 70-107 (KCGP…ENCT), and 112-148 (LCST…ESCE). Disulfide bonds link Cys-29–Cys-42, Cys-37–Cys-55, Cys-49–Cys-64, Cys-71–Cys-84, Cys-78–Cys-97, Cys-91–Cys-106, Cys-113–Cys-125, Cys-120–Cys-138, and Cys-132–Cys-147. Residues 30-57 (NIPGNFMCSNGRCIPGAWQCDGLPDCFD) are (Microbial infection) Interaction with Venezuelan equine encephalitis virus/VEEV spike proteins E1 and E2. The chain crosses the membrane as a helical span at residues 174-194 (YAIIGSSVIFVLVVALLALVL). Over 195–345 (HHQRKRNNLM…SEPSQGTEEV (151 aa)) the chain is Cytoplasmic. 2 short sequence motifs (involved in ITCH interaction) span residues 256 to 259 (PPSY) and 275 to 278 (PPPY). A disordered region spans residues 270 to 345 (WYDLPPPPYS…SEPSQGTEEV (76 aa)). Residues 295–313 (SRSGSANSASSQAASSLLS) are compositionally biased toward low complexity.

The protein belongs to the LDLR family. Interacts with APP precursor C-terminus. Interacts directly with ITCH; this interaction promotes ITCH auto-ubiquitination leading to its degradation. Interacts directly with NEDD4; this interaction promotes NEDD4 auto-ubiquitination. Interacts directly with NEDD4L. As to quaternary structure, (Microbial infection) Interacts (via domain LDL-receptor class A 1) with Venezuelan equine encephalitis virus/VEEV spike proteins E1 and E2. In terms of tissue distribution, expressed at high levels in brain, lung, skeletal muscle, and pancreas. Expressed at moderate levels in heart, placenta, and kidney but not detected in the liver.

It is found in the cell membrane. May influence APP processing, resulting in a decrease in sAPP-alpha production and increased amyloidogenic P3 peptide production. May regulate ITCH and NEDD4 E3 ligase activity and degradation. In terms of biological role, (Microbial infection) Acts as a receptor for Venezuelan equine encephalitis virus. This chain is Low-density lipoprotein receptor class A domain-containing protein 3, found in Homo sapiens (Human).